We begin with the raw amino-acid sequence, 313 residues long: DNA-directed RNA polymerase subunit alpha (313 aa).

Residues 1–226 (MLEIEKPKIE…EHMRLFLGLT (226 aa)) form an alpha N-terminal domain (alpha-NTD) region. An alpha C-terminal domain (alpha-CTD) region spans residues 242–313 (TRDRLMDMSI…LGLSLRSSEE (72 aa)).

Belongs to the RNA polymerase alpha chain family. Homodimer. The RNAP catalytic core consists of 2 alpha, 1 beta, 1 beta' and 1 omega subunit. When a sigma factor is associated with the core the holoenzyme is formed, which can initiate transcription.

The catalysed reaction is RNA(n) + a ribonucleoside 5'-triphosphate = RNA(n+1) + diphosphate. Functionally, DNA-dependent RNA polymerase catalyzes the transcription of DNA into RNA using the four ribonucleoside triphosphates as substrates. This is DNA-directed RNA polymerase subunit alpha from Moorella thermoacetica (strain ATCC 39073 / JCM 9320).